We begin with the raw amino-acid sequence, 105 residues long: Small ribosomal subunit protein uS10 (105 aa).

It belongs to the universal ribosomal protein uS10 family. As to quaternary structure, part of the 30S ribosomal subunit.

Functionally, involved in the binding of tRNA to the ribosomes. The protein is Small ribosomal subunit protein uS10 of Rickettsia massiliae (strain Mtu5).